A 703-amino-acid chain; its full sequence is Cycloartenol synthase (703 aa).

PFTB repeat units follow at residues 59 to 103 (IKKA…QLPE) and 106 to 148 (QREI…RLLG). Residue D435 is the Proton donor of the active site. PFTB repeat units lie at residues 461–503 (IADG…QNIM), 539–579 (IARG…VASG), 587–628 (IVKA…VNTG), and 645–686 (IERG…KNIF).

It belongs to the terpene cyclase/mutase family.

The enzyme catalyses (S)-2,3-epoxysqualene = cycloartenol. Functionally, converts oxidosqualene to cycloartenol (in vitro). This chain is Cycloartenol synthase (cas1), found in Dictyostelium discoideum (Social amoeba).